We begin with the raw amino-acid sequence, 352 residues long: C-C chemokine receptor type 5 (352 aa).

Residues 1-30 (MDYQVSSPTYDIDYYTSEPCQKINVKQIAA) lie on the Extracellular side of the membrane. Sulfotyrosine is present on Tyr-3. 2 O-linked (GalNAc...) serine glycosylation sites follow: Ser-6 and Ser-7. 3 positions are modified to sulfotyrosine: Tyr-10, Tyr-14, and Tyr-15. Intrachain disulfides connect Cys-20–Cys-269 and Cys-101–Cys-178. A helical membrane pass occupies residues 31 to 58 (RLLPPLYSLVFIFGFVGNILVVLILINC). The Cytoplasmic portion of the chain corresponds to 59–68 (KRLKSMTDIY). A helical transmembrane segment spans residues 69-89 (LLNLAISDLLFLLTVPFWAHY). Residues 90–102 (AAAQWDFGNTMCQ) lie on the Extracellular side of the membrane. Residues 103 to 124 (LLTGLYFIGFFSGIFFIILLTI) traverse the membrane as a helical segment. The Cytoplasmic segment spans residues 125 to 141 (DRYLAIVHAVFALKART). The chain crosses the membrane as a helical span at residues 142–166 (VTFGVVTSVITWVVAVFASLPGIIF). Residues 167-198 (TRSQREGLHYTCSSHFPYSQYQFWKNFQTLKI) are Extracellular-facing. The chain crosses the membrane as a helical span at residues 199–218 (VILGLVLPLLVMVICYSGIL). The Cytoplasmic portion of the chain corresponds to 219–235 (KTLLRCRNEKKRHRAVR). Residues 236 to 260 (LIFTIMIVYFLFWAPYNIVLLLNTF) form a helical membrane-spanning segment. The Extracellular segment spans residues 261–277 (QEFFGLNNCSSSNRLDQ). A helical membrane pass occupies residues 278–301 (AMQVTETLGMTHCCINPIIYAFVG). The Cytoplasmic segment spans residues 302–352 (EKFRNYLLVFFQKHIAKRFCKCCSIFQQEASERASSVYTRSTGEQEISVGL). S-palmitoyl cysteine attachment occurs at residues Cys-321, Cys-323, and Cys-324. Phosphoserine; by BARK1 occurs at positions 336, 337, 342, and 349.

It belongs to the G-protein coupled receptor 1 family. Interacts with PRAF2. Efficient ligand binding to CCL3/MIP-1alpha and CCL4/MIP-1beta requires sulfation, O-glycosylation and sialic acid modifications. Glycosylation on Ser-6 is required for efficient binding of CCL4. Interacts with GRK2. Interacts with ARRB1 and ARRB2. Interacts with CNIH4. Interacts with S100A4; this interaction stimulates T-lymphocyte chemotaxis. Post-translationally, sulfated on at least 2 of the N-terminal tyrosines. Sulfation is required for efficient binding of the chemokines, CCL3 and CCL4. In terms of processing, palmitoylation in the C-terminal is important for cell surface expression. Phosphorylation on serine residues in the C-terminal is stimulated by binding CC chemokines especially by APO-RANTES. Post-translationally, O-glycosylated, but not N-glycosylated. Ser-6 appears to be the major site even if Ser-7 may be also O-glycosylated. Also sialylated glycans present which contribute to chemokine binding. Thr-16 and Ser-17 may also be glycosylated and, if so, with small moieties such as a T-antigen.

It is found in the cell membrane. Its function is as follows. Receptor for a number of inflammatory CC-chemokines including CCL3/MIP-1-alpha, CCL4/MIP-1-beta and RANTES and subsequently transduces a signal by increasing the intracellular calcium ion level. May play a role in the control of granulocytic lineage proliferation or differentiation. Participates in T-lymphocyte migration to the infection site by acting as a chemotactic receptor. The protein is C-C chemokine receptor type 5 (CCR5) of Cercocebus galeritus (Tana river mangabey).